The following is a 392-amino-acid chain: 1-deoxy-D-xylulose 5-phosphate reductoisomerase (392 aa).

Positions 14, 15, 16, 17, 40, 43, and 126 each coordinate NADPH. K127 provides a ligand contact to 1-deoxy-D-xylulose 5-phosphate. Residue E128 participates in NADPH binding. D150 contacts Mn(2+). Residues S151, E152, S176, and H199 each contribute to the 1-deoxy-D-xylulose 5-phosphate site. E152 is a Mn(2+) binding site. G205 provides a ligand contact to NADPH. 4 residues coordinate 1-deoxy-D-xylulose 5-phosphate: S212, N217, K218, and E221. Residue E221 participates in Mn(2+) binding.

This sequence belongs to the DXR family. It depends on Mg(2+) as a cofactor. Mn(2+) serves as cofactor.

It carries out the reaction 2-C-methyl-D-erythritol 4-phosphate + NADP(+) = 1-deoxy-D-xylulose 5-phosphate + NADPH + H(+). The protein operates within isoprenoid biosynthesis; isopentenyl diphosphate biosynthesis via DXP pathway; isopentenyl diphosphate from 1-deoxy-D-xylulose 5-phosphate: step 1/6. Functionally, catalyzes the NADPH-dependent rearrangement and reduction of 1-deoxy-D-xylulose-5-phosphate (DXP) to 2-C-methyl-D-erythritol 4-phosphate (MEP). The chain is 1-deoxy-D-xylulose 5-phosphate reductoisomerase from Corynebacterium glutamicum (strain ATCC 13032 / DSM 20300 / JCM 1318 / BCRC 11384 / CCUG 27702 / LMG 3730 / NBRC 12168 / NCIMB 10025 / NRRL B-2784 / 534).